The sequence spans 241 residues: Platelet-derived growth factor subunit B (241 aa).

The signal sequence occupies residues 1 to 20 (MNRCWALFLPLCCYLRLVSA). The propeptide at 21-81 (EGDPIPEELY…ELESSSRGRR (61 aa)) is removed in mature form. Asn-63 carries an N-linked (GlcNAc...) asparagine glycan. Intrachain disulfides connect Cys-97–Cys-141, Cys-130–Cys-178, and Cys-134–Cys-180. The propeptide at 191 to 241 (RSPGTSREQRAKTPQARVTIRTVRIRRPPKGKHRKFKHTHDKAALKETLGA) is removed in mature form. Residues 217–230 (RPPKGKHRKFKHTH) show a composition bias toward basic residues. Positions 217–241 (RPPKGKHRKFKHTHDKAALKETLGA) are disordered.

The protein belongs to the PDGF/VEGF growth factor family. As to quaternary structure, antiparallel homodimer; disulfide-linked. Antiparallel heterodimer with PDGFA; disulfide-linked. The PDGFB homodimer interacts with PDGFRA and PDGFRB homodimers, and with heterodimers formed by PDGFRA and PDGFRB. The heterodimer composed of PDGFA and PDGFB interacts with PDGFRB homodimers, and with heterodimers formed by PDGFRA and PDGFRB. Interacts with XLKD1. Interacts with LRP1. Interacts with SORL1 (via the N-terminal ectodomain). Interacts with CD82; this interaction inhibits PDGFB-mediated signaling pathway. As to expression, localized to vascular smooth muscle cells. Also weakly expressed by cortical interstitial cells but absent in tubules. Up-regulated in areas of renal fibrosis. In mice with unilateral ureteral obstruction, an increased expression in interstitial cells and in some tubules observed after day 4.

It is found in the secreted. Functionally, growth factor that plays an essential role in the regulation of embryonic development, cell proliferation, cell migration, survival and chemotaxis. Potent mitogen for cells of mesenchymal origin. Required for normal proliferation and recruitment of pericytes and vascular smooth muscle cells in the central nervous system, skin, lung, heart and placenta. Required for normal blood vessel development, and for normal development of kidney glomeruli. Plays an important role in wound healing. Signaling is modulated by the formation of heterodimers with PDGFA. The protein is Platelet-derived growth factor subunit B (Pdgfb) of Mus musculus (Mouse).